We begin with the raw amino-acid sequence, 787 residues long: Protein translocase subunit SecA (787 aa).

Residues Gln-85, 103-107 (GEGKT), and Asp-492 contribute to the ATP site.

The protein belongs to the SecA family. In terms of assembly, monomer and homodimer. Part of the essential Sec protein translocation apparatus which comprises SecA, SecYEG and auxiliary proteins SecDF. Other proteins may also be involved.

The protein localises to the cell membrane. It is found in the cytoplasm. It catalyses the reaction ATP + H2O + cellular proteinSide 1 = ADP + phosphate + cellular proteinSide 2.. In terms of biological role, part of the Sec protein translocase complex. Interacts with the SecYEG preprotein conducting channel. Has a central role in coupling the hydrolysis of ATP to the transfer of proteins into and across the cell membrane, serving as an ATP-driven molecular motor driving the stepwise translocation of polypeptide chains across the membrane. This Lactiplantibacillus plantarum (strain ATCC BAA-793 / NCIMB 8826 / WCFS1) (Lactobacillus plantarum) protein is Protein translocase subunit SecA.